Here is a 1170-residue protein sequence, read N- to C-terminus: Structural maintenance of chromosomes protein 2 (1170 aa).

Residue 32-39 (GLNGSGKS) coordinates ATP. Positions 172-469 (KMFEDRREKA…DKLRARLVEY (298 aa)) form a coiled coil. Residues 523-641 (VHGVVGQLFQ…CEDPETAKKI (119 aa)) form the SMC hinge domain. Residues 678–1027 (VDIQKYNQIQ…ISKLNEYKRE (350 aa)) adopt a coiled-coil conformation.

This sequence belongs to the SMC family. SMC2 subfamily. In terms of assembly, forms a heterodimer with SMC4. Component of the condensin complex, which contains the SMC2 and SMC4 heterodimer, and three non SMC subunits that probably regulate the complex: BRN1, YCS4 and YCG1/YCS5.

The protein localises to the nucleus. Its subcellular location is the cytoplasm. The protein resides in the chromosome. Functionally, central component of the condensin complex, a complex required for conversion of interphase chromatin into mitotic-like condense chromosomes. The condensin complex probably introduces positive supercoils into relaxed DNA in the presence of type I topoisomerases and converts nicked DNA into positive knotted forms in the presence of type II topoisomerases. This Saccharomyces cerevisiae (strain ATCC 204508 / S288c) (Baker's yeast) protein is Structural maintenance of chromosomes protein 2 (SMC2).